The chain runs to 753 residues: 5-methyltetrahydropteroyltriglutamate--homocysteine methyltransferase (753 aa).

Residues 17–20 (RELK) and lysine 117 contribute to the 5-methyltetrahydropteroyltri-L-glutamate site. L-homocysteine contacts are provided by residues 431–433 (IGS) and glutamate 484. L-methionine is bound by residues 431–433 (IGS) and glutamate 484. 5-methyltetrahydropteroyltri-L-glutamate is bound by residues 515–516 (RC) and tryptophan 561. L-homocysteine is bound at residue aspartate 599. Aspartate 599 lines the L-methionine pocket. Glutamate 605 provides a ligand contact to 5-methyltetrahydropteroyltri-L-glutamate. Residues histidine 641, cysteine 643, and glutamate 665 each coordinate Zn(2+). The Proton donor role is filled by histidine 694. Cysteine 726 is a Zn(2+) binding site.

The protein belongs to the vitamin-B12 independent methionine synthase family. It depends on Zn(2+) as a cofactor.

The catalysed reaction is 5-methyltetrahydropteroyltri-L-glutamate + L-homocysteine = tetrahydropteroyltri-L-glutamate + L-methionine. The protein operates within amino-acid biosynthesis; L-methionine biosynthesis via de novo pathway; L-methionine from L-homocysteine (MetE route): step 1/1. In terms of biological role, catalyzes the transfer of a methyl group from 5-methyltetrahydrofolate to homocysteine resulting in methionine formation. The chain is 5-methyltetrahydropteroyltriglutamate--homocysteine methyltransferase from Escherichia coli O6:H1 (strain CFT073 / ATCC 700928 / UPEC).